A 445-amino-acid polypeptide reads, in one-letter code: Tubulin beta chain (445 aa).

GTP-binding residues include glutamine 11, glutamate 69, serine 138, glycine 142, threonine 143, glycine 144, asparagine 205, and asparagine 227. Glutamate 69 lines the Mg(2+) pocket.

The protein belongs to the tubulin family. Dimer of alpha and beta chains. A typical microtubule is a hollow water-filled tube with an outer diameter of 25 nm and an inner diameter of 15 nM. Alpha-beta heterodimers associate head-to-tail to form protofilaments running lengthwise along the microtubule wall with the beta-tubulin subunit facing the microtubule plus end conferring a structural polarity. Microtubules usually have 13 protofilaments but different protofilament numbers can be found in some organisms and specialized cells. Mg(2+) serves as cofactor.

The protein resides in the cytoplasm. The protein localises to the cytoskeleton. In terms of biological role, tubulin is the major constituent of microtubules, a cylinder consisting of laterally associated linear protofilaments composed of alpha- and beta-tubulin heterodimers. Microtubules grow by the addition of GTP-tubulin dimers to the microtubule end, where a stabilizing cap forms. Below the cap, tubulin dimers are in GDP-bound state, owing to GTPase activity of alpha-tubulin. This chain is Tubulin beta chain (TUB2), found in Ajellomyces capsulatus (Darling's disease fungus).